Here is an 839-residue protein sequence, read N- to C-terminus: Phenylalanine--tRNA ligase beta subunit (839 aa).

The region spanning 42–166 (GELTGPIVIG…PPSVEGHQLV (125 aa)) is the tRNA-binding domain. In terms of domain architecture, B5 spans 421 to 496 (PEMPRQTINA…RKIGFDRIKA (76 aa)). Mg(2+) contacts are provided by D474, D480, E483, and E484. The region spanning 745-838 (SSFPVAKEDV…AEETCGAQLR (94 aa)) is the FDX-ACB domain.

Belongs to the phenylalanyl-tRNA synthetase beta subunit family. Type 1 subfamily. Tetramer of two alpha and two beta subunits. Requires Mg(2+) as cofactor.

It is found in the cytoplasm. It carries out the reaction tRNA(Phe) + L-phenylalanine + ATP = L-phenylalanyl-tRNA(Phe) + AMP + diphosphate + H(+). The polypeptide is Phenylalanine--tRNA ligase beta subunit (Cutibacterium acnes (strain DSM 16379 / KPA171202) (Propionibacterium acnes)).